A 1677-amino-acid polypeptide reads, in one-letter code: ELMO domain-containing protein E (1677 aa).

Disordered stretches follow at residues 112 to 139 (TTTS…SSPS), 168 to 194 (NSKD…SNIK), 264 to 372 (QLHG…NTTE), 592 to 625 (DDDN…RSNS), 775 to 801 (PNSN…STNN), 888 to 947 (INKN…NQDI), 982 to 1002 (KIRS…SQPE), 1047 to 1075 (STNN…ETRS), 1122 to 1141 (KQKS…GNVS), 1197 to 1248 (NNNI…DNHA), 1261 to 1404 (DDDD…RKKR), 1434 to 1454 (SPGS…PQPE), 1467 to 1593 (KNPE…GDVS), and 1654 to 1677 (ESQR…SSSK). 2 stretches are compositionally biased toward low complexity: residues 115–139 (SSSS…SSPS) and 172–194 (TNNS…SNIK). A compositionally biased stretch (gly residues) spans 269–278 (SIGGGGGGSG). Composition is skewed to low complexity over residues 307–334 (SQSN…KPNN), 341–352 (TTTTTTTTTTTS), and 597–616 (NNNN…NNYN). The ELMO domain occupies 492 to 710 (SHQILLSDLW…HTREIIEKVC (219 aa)). Residues 891 to 903 (NGGGGGGGGGGGV) show a composition bias toward gly residues. Positions 922–933 (IDDSDDENDNDE) are enriched in acidic residues. Low complexity-rich tracts occupy residues 934–946 (VNNN…INQD) and 985–996 (SSSSTPDTSSPP). The stretch at 1186 to 1212 (LLDDVLDLNQTNNNIDNENDDINEAII) forms a coiled coil. Positions 1228 to 1238 (EEEEEEEEEEE) are enriched in acidic residues. Residues 1285–1305 (NNTTTTTTTTTTTTTTTTNTT) are compositionally biased toward low complexity. Over residues 1306–1334 (GQKRISILSTDTNRPGSSNYGESSLSNGS) the composition is skewed to polar residues. Over residues 1387-1397 (DDEDDEDDDDK) the composition is skewed to acidic residues. Over residues 1445 to 1454 (PHLSVSPQPE) the composition is skewed to polar residues. 3 stretches are compositionally biased toward low complexity: residues 1475-1488 (LSSS…PLLS), 1503-1574 (SNLI…PSSS), and 1663-1677 (ASSS…SSSK).

The sequence is that of ELMO domain-containing protein E (elmoE) from Dictyostelium discoideum (Social amoeba).